A 491-amino-acid chain; its full sequence is Ketol-acid reductoisomerase (NADP(+)) (491 aa).

One can recognise a KARI N-terminal Rossmann domain in the interval 15 to 208; the sequence is AQLGKCRFMG…GGHRAGVLES (194 aa). Residues 45-48, arginine 68, arginine 76, serine 78, and 108-110 each bind NADP(+); these read CGAQ and DKQ. Histidine 132 is an active-site residue. Residue glycine 158 coordinates NADP(+). 2 KARI C-terminal knotted domains span residues 209–344 and 345–484; these read SFVA…TAPQ and YEGK…MTDM. The Mg(2+) site is built by aspartate 217, glutamate 221, glutamate 389, and glutamate 393. Serine 414 contributes to the substrate binding site.

The protein belongs to the ketol-acid reductoisomerase family. It depends on Mg(2+) as a cofactor.

The enzyme catalyses (2R)-2,3-dihydroxy-3-methylbutanoate + NADP(+) = (2S)-2-acetolactate + NADPH + H(+). It catalyses the reaction (2R,3R)-2,3-dihydroxy-3-methylpentanoate + NADP(+) = (S)-2-ethyl-2-hydroxy-3-oxobutanoate + NADPH + H(+). The protein operates within amino-acid biosynthesis; L-isoleucine biosynthesis; L-isoleucine from 2-oxobutanoate: step 2/4. It participates in amino-acid biosynthesis; L-valine biosynthesis; L-valine from pyruvate: step 2/4. Functionally, involved in the biosynthesis of branched-chain amino acids (BCAA). Catalyzes an alkyl-migration followed by a ketol-acid reduction of (S)-2-acetolactate (S2AL) to yield (R)-2,3-dihydroxy-isovalerate. In the isomerase reaction, S2AL is rearranged via a Mg-dependent methyl migration to produce 3-hydroxy-3-methyl-2-ketobutyrate (HMKB). In the reductase reaction, this 2-ketoacid undergoes a metal-dependent reduction by NADPH to yield (R)-2,3-dihydroxy-isovalerate. The sequence is that of Ketol-acid reductoisomerase (NADP(+)) from Escherichia fergusonii (strain ATCC 35469 / DSM 13698 / CCUG 18766 / IAM 14443 / JCM 21226 / LMG 7866 / NBRC 102419 / NCTC 12128 / CDC 0568-73).